The sequence spans 412 residues: Gamma-glutamyl phosphate reductase (412 aa).

It belongs to the gamma-glutamyl phosphate reductase family.

It localises to the cytoplasm. It catalyses the reaction L-glutamate 5-semialdehyde + phosphate + NADP(+) = L-glutamyl 5-phosphate + NADPH + H(+). It functions in the pathway amino-acid biosynthesis; L-proline biosynthesis; L-glutamate 5-semialdehyde from L-glutamate: step 2/2. Its function is as follows. Catalyzes the NADPH-dependent reduction of L-glutamate 5-phosphate into L-glutamate 5-semialdehyde and phosphate. The product spontaneously undergoes cyclization to form 1-pyrroline-5-carboxylate. The polypeptide is Gamma-glutamyl phosphate reductase (Actinobacillus pleuropneumoniae serotype 5b (strain L20)).